A 310-amino-acid chain; its full sequence is MSTGTGSLTALQDCGVLQQKVPLAEFTTWRVGGPAQWLAEPTSTEQIPELLQWARERRLPVHMIGAGSNLLIADGGLPGLTLCLRRLQGSALNADTGRVRAAAGEPLPTLARRAAKAGLQGLEWAVGIPGTVGGAAVMNAGAQGGCTAEQLISVDVIRFSDAQPSLATLSRDELAFSYRHSALQSNRHLVVAAEFQLEPGHDPAELQRLTSGNLNHRTSTQPYKLPSCGSVFRNPEPEKAGRLIESLGLKGRAIGGAQVSELHANFIVNTGDASANDIRALISLVQGEVMEAKGIALHPEVKRLGFETPD.

The region spanning 30-200 (RVGGPAQWLA…VAAEFQLEPG (171 aa)) is the FAD-binding PCMH-type domain. R179 is a catalytic residue. S230 acts as the Proton donor in catalysis. E300 is a catalytic residue.

This sequence belongs to the MurB family. It depends on FAD as a cofactor.

The protein resides in the cytoplasm. It carries out the reaction UDP-N-acetyl-alpha-D-muramate + NADP(+) = UDP-N-acetyl-3-O-(1-carboxyvinyl)-alpha-D-glucosamine + NADPH + H(+). The protein operates within cell wall biogenesis; peptidoglycan biosynthesis. Functionally, cell wall formation. The sequence is that of UDP-N-acetylenolpyruvoylglucosamine reductase from Synechococcus sp. (strain WH7803).